Consider the following 483-residue polypeptide: Membrane-bound lytic murein transglycosylase F (483 aa).

Positions 1 to 18 (MKGLIARFIAGFALLLWA) are cleaved as a signal peptide. The non-LT domain stretch occupies residues 19 to 267 (WDMVFPWQQL…RIEEKYFNHL (249 aa)). The segment at 269 to 483 (HFDYVDIQSY…SKESDSTLKE (215 aa)) is LT domain. The active site involves glutamate 312. Positions 458–483 (QQIQNNEEQPSVPQEISKESDSTLKE) are disordered. The segment covering 473 to 483 (ISKESDSTLKE) has biased composition (basic and acidic residues).

In the N-terminal section; belongs to the bacterial solute-binding protein 3 family. The protein in the C-terminal section; belongs to the transglycosylase Slt family.

Its subcellular location is the cell outer membrane. The catalysed reaction is Exolytic cleavage of the (1-&gt;4)-beta-glycosidic linkage between N-acetylmuramic acid (MurNAc) and N-acetylglucosamine (GlcNAc) residues in peptidoglycan, from either the reducing or the non-reducing ends of the peptidoglycan chains, with concomitant formation of a 1,6-anhydrobond in the MurNAc residue.. Its function is as follows. Murein-degrading enzyme that degrades murein glycan strands and insoluble, high-molecular weight murein sacculi, with the concomitant formation of a 1,6-anhydromuramoyl product. Lytic transglycosylases (LTs) play an integral role in the metabolism of the peptidoglycan (PG) sacculus. Their lytic action creates space within the PG sacculus to allow for its expansion as well as for the insertion of various structures such as secretion systems and flagella. The chain is Membrane-bound lytic murein transglycosylase F from Actinobacillus pleuropneumoniae serotype 3 (strain JL03).